Here is a 125-residue protein sequence, read N- to C-terminus: Secretion system apparatus protein SsaO (125 aa).

This chain is Secretion system apparatus protein SsaO (ssaO), found in Salmonella typhimurium (strain LT2 / SGSC1412 / ATCC 700720).